Here is a 194-residue protein sequence, read N- to C-terminus: MTQRIASHSRKTAETDISATVNLDGSGTSAIETGVVFLDHMLTNFSRHSGIDVQLRCSGDLEVDDHHTVEDVALVLGKAIVDALGDKKGIGRYGWAIIPMDEALAQCSIDLGGRSYCVFRAEFQRPVIQGLSTEMVEHFFVSLSRTMNANLHLAVLEGRNTHHMIEALFKSLAYAMKQAVKVESTEIKSTKGAI.

Belongs to the imidazoleglycerol-phosphate dehydratase family.

The protein localises to the cytoplasm. It carries out the reaction D-erythro-1-(imidazol-4-yl)glycerol 3-phosphate = 3-(imidazol-4-yl)-2-oxopropyl phosphate + H2O. It participates in amino-acid biosynthesis; L-histidine biosynthesis; L-histidine from 5-phospho-alpha-D-ribose 1-diphosphate: step 6/9. The chain is Imidazoleglycerol-phosphate dehydratase from Chlorobaculum tepidum (strain ATCC 49652 / DSM 12025 / NBRC 103806 / TLS) (Chlorobium tepidum).